The primary structure comprises 96 residues: MENKLLSSQEIQELRKSLPTWEEAEGKLVKRFKFTNFIEAFGFMTKIAIISESLSHHPEWTNIYSEVIIRLSTHDMGGITMLDYKLAKAIDAIKYE.

It belongs to the pterin-4-alpha-carbinolamine dehydratase family.

The enzyme catalyses (4aS,6R)-4a-hydroxy-L-erythro-5,6,7,8-tetrahydrobiopterin = (6R)-L-erythro-6,7-dihydrobiopterin + H2O. In Prochlorococcus marinus (strain SARG / CCMP1375 / SS120), this protein is Putative pterin-4-alpha-carbinolamine dehydratase.